A 334-amino-acid chain; its full sequence is Thioredoxin reductase (334 aa).

Residues 10 to 13, 39 to 40, Gln-44, Asn-53, Val-86, Cys-143, Asp-287, and 294 to 296 contribute to the FAD site; these read SGPA, IA, and RQA. Cys-140 and Cys-143 are oxidised to a cystine.

It belongs to the class-II pyridine nucleotide-disulfide oxidoreductase family. In terms of assembly, homodimer. It depends on FAD as a cofactor.

It localises to the cytoplasm. The enzyme catalyses [thioredoxin]-dithiol + NADP(+) = [thioredoxin]-disulfide + NADPH + H(+). The sequence is that of Thioredoxin reductase (cys-9) from Neurospora crassa (strain ATCC 24698 / 74-OR23-1A / CBS 708.71 / DSM 1257 / FGSC 987).